The primary structure comprises 344 residues: L-rhamnose-proton symporter (344 aa).

10 helical membrane passes run 4–24 (AITMGIFWHLIGAASAACFYA), 38–58 (WSVGGIVSWIILPWAISALLL), 74–94 (LPVFLFGAMWGIGNINYGLTM), 101–121 (MGIGIAIGITLIVGTLMTPII), 137–157 (TLLGVLVALIGVGIVTRAGQL), 175–195 (LVLAVMCGIFSAGMSFAMNAA), 214–234 (LPSYVVIMGGGAIINLGFCFI), 259–279 (VLLSTLGGLMWYLQFFFYAWG), 290–310 (ISWMLHMSFYVLCGGIVGLVL), and 323–343 (VLSLGCVVIIVAANIVGIGMA).

It belongs to the L-rhamnose transporter (TC 2.A.7.6) family.

Its subcellular location is the cell inner membrane. It catalyses the reaction L-rhamnopyranose(in) + H(+)(in) = L-rhamnopyranose(out) + H(+)(out). Its function is as follows. Uptake of L-rhamnose across the cytoplasmic membrane with the concomitant transport of protons into the cell (symport system). The protein is L-rhamnose-proton symporter of Escherichia coli (strain K12 / MC4100 / BW2952).